Reading from the N-terminus, the 235-residue chain is Glycerol-3-phosphate acyltransferase (235 aa).

The next 6 membrane-spanning stretches (helical) occupy residues 2–22 (FTLIVILAVSYLIGSIPTSII), 56–76 (TVTILDIVKGAIAAISVVVFF), 94–114 (LIAGLSAVFGHVFTVFAGFKG), 126–146 (FGIAPVTTLIVLGVFLLVVFL), 152–172 (VASILAAIAFPVIIAVRKYLF), and 190–210 (FIHDSLDYHLLIFGFIVAAAI).

The protein belongs to the PlsY family. In terms of assembly, probably interacts with PlsX.

The protein localises to the cell inner membrane. It carries out the reaction an acyl phosphate + sn-glycerol 3-phosphate = a 1-acyl-sn-glycero-3-phosphate + phosphate. It participates in lipid metabolism; phospholipid metabolism. Functionally, catalyzes the transfer of an acyl group from acyl-phosphate (acyl-PO(4)) to glycerol-3-phosphate (G3P) to form lysophosphatidic acid (LPA). This enzyme utilizes acyl-phosphate as fatty acyl donor, but not acyl-CoA or acyl-ACP. The protein is Glycerol-3-phosphate acyltransferase of Chlorobium phaeobacteroides (strain BS1).